Reading from the N-terminus, the 45-residue chain is Photosystem I reaction center subunit IX 1 (45 aa).

A helical membrane pass occupies residues 9–29; the sequence is WFRSAPVVATIWITLTAGIIV.

This sequence belongs to the PsaJ family.

The protein resides in the cellular thylakoid membrane. May help in the organization of the PsaE and PsaF subunits. This is Photosystem I reaction center subunit IX 1 from Prochlorococcus marinus (strain NATL1A).